Consider the following 234-residue polypeptide: Octanoyltransferase (234 aa).

Positions 35–221 constitute a BPL/LPL catalytic domain; sequence DGAPELVWFL…AFQQVFASPL (187 aa). Substrate is bound by residues 74-81, 150-152, and 163-165; these read RGGQYTYH, AIG, and GIS. C181 (acyl-thioester intermediate) is an active-site residue.

This sequence belongs to the LipB family.

The protein localises to the cytoplasm. It carries out the reaction octanoyl-[ACP] + L-lysyl-[protein] = N(6)-octanoyl-L-lysyl-[protein] + holo-[ACP] + H(+). Its pathway is protein modification; protein lipoylation via endogenous pathway; protein N(6)-(lipoyl)lysine from octanoyl-[acyl-carrier-protein]: step 1/2. In terms of biological role, catalyzes the transfer of endogenously produced octanoic acid from octanoyl-acyl-carrier-protein onto the lipoyl domains of lipoate-dependent enzymes. Lipoyl-ACP can also act as a substrate although octanoyl-ACP is likely to be the physiological substrate. This Hyphomonas neptunium (strain ATCC 15444) protein is Octanoyltransferase.